A 749-amino-acid polypeptide reads, in one-letter code: Subtilisin-like protease SBT4.14 (749 aa).

An N-terminal signal peptide occupies residues 1-28 (MIRSKCSCHHHLLVLVMVVLWISPRYAS). Positions 29 to 115 (AEDEHAKDFY…VSRNQYRKLH (87 aa)) are cleaved as a propeptide — activation peptide. Residues 38 to 115 (YIIYLGDRPD…VSRNQYRKLH (78 aa)) form the Inhibitor I9 domain. A Peptidase S8 domain is found at 119–595 (SWDFVGLPLT…GGQINPRRAA (477 aa)). The active-site Charge relay system is aspartate 145. An N-linked (GlcNAc...) asparagine glycan is attached at asparagine 176. Histidine 210 (charge relay system) is an active-site residue. N-linked (GlcNAc...) asparagine glycosylation is found at asparagine 225, asparagine 233, asparagine 446, and asparagine 458. Serine 536 serves as the catalytic Charge relay system. Asparagine 618 is a glycosylation site (N-linked (GlcNAc...) asparagine).

This sequence belongs to the peptidase S8 family. In terms of processing, the C-terminal propeptide is autocleaved. In terms of tissue distribution, expressed only in roots, particularly in xylem.

The polypeptide is Subtilisin-like protease SBT4.14 (Arabidopsis thaliana (Mouse-ear cress)).